The following is a 476-amino-acid chain: Cysteine--tRNA ligase (476 aa).

Cys31 is a binding site for Zn(2+). A 'HIGH' region motif is present at residues 33 to 43; that stretch reads PTVYNYAHIGN. Positions 211, 236, and 240 each coordinate Zn(2+). The short motif at 269 to 273 is the 'KMSKS' region element; sequence KMSKS. Lys272 serves as a coordination point for ATP.

It belongs to the class-I aminoacyl-tRNA synthetase family. As to quaternary structure, monomer. The cofactor is Zn(2+).

It localises to the cytoplasm. It catalyses the reaction tRNA(Cys) + L-cysteine + ATP = L-cysteinyl-tRNA(Cys) + AMP + diphosphate. The chain is Cysteine--tRNA ligase from Xanthomonas oryzae pv. oryzae (strain MAFF 311018).